The following is a 524-amino-acid chain: Serine/threonine-protein kinase PAK 2 (524 aa).

The segment at 1–81 (MSDNGELEDK…PEISPPSDFE (81 aa)) is disordered. Ser-2 bears the N-acetylserine mark. Phosphoserine is present on residues Ser-2, Ser-20, Ser-55, and Ser-58. Thr-60 is subject to Phosphothreonine. The residue at position 62 (Lys-62) is an N6-acetyllysine. Ser-64 is subject to Phosphoserine. The segment covering 67–81 (KEKERPEISPPSDFE) has biased composition (basic and acidic residues). The segment at 69–112 (KERPEISPPSDFEHTIHVGFDAVTGEFTGMPEQWARLLQTSNIT) is GTPase-binding. An autoregulatory region region spans residues 69-137 (KERPEISPPS…KFYDSNTVKQ (69 aa)). Residues 74-87 (ISPPSDFEHTIHVG) enclose the CRIB domain. Lys-128 is subject to N6-acetyllysine. A Phosphothreonine modification is found at Thr-134. At Tyr-139 the chain carries Phosphotyrosine. Ser-141 is subject to Phosphoserine. Thr-143 carries the phosphothreonine modification. Disordered stretches follow at residues 143–164 (TPPE…GTEA) and 169–188 (TEEE…PRPD). A Phosphoserine modification is found at Ser-152. 2 positions are modified to phosphothreonine: Thr-154 and Thr-169. The segment covering 169–178 (TEEEDDDEET) has biased composition (acidic residues). The residue at position 197 (Ser-197) is a Phosphoserine. Gly-213 is lipidated: N-myristoyl glycine; in form PAK-2p34. The short motif at 245-251 (PKKKYTR) is the Nuclear localization signal element. The Protein kinase domain maps to 249 to 499 (YTRYEKIGQG…SAKELLQHPF (251 aa)). Residues 255–263 (IGQGASGTV) and Lys-278 contribute to the ATP site. Arg-367 acts as the Proton acceptor in catalysis. A Phosphothreonine; by autocatalysis modification is found at Thr-402.

This sequence belongs to the protein kinase superfamily. STE Ser/Thr protein kinase family. STE20 subfamily. Interacts tightly with GTP-bound but not GDP-bound CDC42/p21 and RAC1. Interacts with SH3MD4. Interacts with SCRIB. Interacts with ARHGEF7 and GIT1. PAK-2p34 interacts with ARHGAP10. As to quaternary structure, (Microbial infection) Interacts with and activated by HIV-1 Nef. Full-length PAK2 is autophosphorylated when activated by CDC42/p21. Following cleavage, both peptides, PAK-2p27 and PAK-2p34, become highly autophosphorylated, with PAK-2p27 being phosphorylated on serine and PAK-2p34 on threonine residues, respectively. Autophosphorylation of PAK-2p27 can occur in the absence of any effectors and is dependent on phosphorylation of Thr-402, because PAK-2p27 is acting as an exogenous substrate. In terms of processing, during apoptosis proteolytically cleaved by caspase-3 or caspase-3-like proteases to yield active PAK-2p34. Post-translationally, ubiquitinated, leading to its proteasomal degradation. PAK-2p34 is myristoylated. Ubiquitously expressed. Higher levels seen in skeletal muscle, ovary, thymus and spleen.

It is found in the cytoplasm. The protein localises to the nucleus. It localises to the perinuclear region. The protein resides in the membrane. It carries out the reaction L-seryl-[protein] + ATP = O-phospho-L-seryl-[protein] + ADP + H(+). The enzyme catalyses L-threonyl-[protein] + ATP = O-phospho-L-threonyl-[protein] + ADP + H(+). Its activity is regulated as follows. Activated by binding small G proteins. Binding of GTP-bound CDC42 or RAC1 to the autoregulatory region releases monomers from the autoinhibited dimer, enables phosphorylation of Thr-402 and allows the kinase domain to adopt an active structure. Following caspase cleavage, autophosphorylated PAK-2p34 is constitutively active. In terms of biological role, serine/threonine protein kinase that plays a role in a variety of different signaling pathways including cytoskeleton regulation, cell motility, cell cycle progression, apoptosis or proliferation. Acts as a downstream effector of the small GTPases CDC42 and RAC1. Activation by the binding of active CDC42 and RAC1 results in a conformational change and a subsequent autophosphorylation on several serine and/or threonine residues. Full-length PAK2 stimulates cell survival and cell growth. Phosphorylates MAPK4 and MAPK6 and activates the downstream target MAPKAPK5, a regulator of F-actin polymerization and cell migration. Phosphorylates JUN and plays an important role in EGF-induced cell proliferation. Phosphorylates many other substrates including histone H4 to promote assembly of H3.3 and H4 into nucleosomes, BAD, ribosomal protein S6, or MBP. Phosphorylates CASP7, thereby preventing its activity. Additionally, associates with ARHGEF7 and GIT1 to perform kinase-independent functions such as spindle orientation control during mitosis. On the other hand, apoptotic stimuli such as DNA damage lead to caspase-mediated cleavage of PAK2, generating PAK-2p34, an active p34 fragment that translocates to the nucleus and promotes cellular apoptosis involving the JNK signaling pathway. Caspase-activated PAK2 phosphorylates MKNK1 and reduces cellular translation. This Homo sapiens (Human) protein is Serine/threonine-protein kinase PAK 2 (PAK2).